The following is a 515-amino-acid chain: Maturase K (515 aa).

This sequence belongs to the intron maturase 2 family. MatK subfamily.

The protein localises to the plastid. Its subcellular location is the chloroplast. Functionally, usually encoded in the trnK tRNA gene intron. Probably assists in splicing its own and other chloroplast group II introns. In Pinus pumila (Dwarf Siberian pine), this protein is Maturase K.